The following is a 501-amino-acid chain: Lysine--tRNA ligase (501 aa).

Residues E404 and E411 each contribute to the Mg(2+) site.

Belongs to the class-II aminoacyl-tRNA synthetase family. Homodimer. It depends on Mg(2+) as a cofactor.

The protein resides in the cytoplasm. It catalyses the reaction tRNA(Lys) + L-lysine + ATP = L-lysyl-tRNA(Lys) + AMP + diphosphate. This chain is Lysine--tRNA ligase, found in Campylobacter jejuni (strain RM1221).